The primary structure comprises 569 residues: Vacuolar protein sorting-associated protein 45 homolog (569 aa).

The protein belongs to the STXBP/unc-18/SEC1 family. Interacts with both SYP41 or SYP42 and VTI12, but in different domains of the trans-Golgi network. Does not interact on the pervacuolar compartment with VTI11, SYP21 or SYP22, or on the cis-Golgi with SYP31. Interacts at the trans-Golgi network (TGN) with the SYP41/SYP61/VTI12 SNARE complex. In terms of tissue distribution, highly expressed in roots, lower expression in leaves, stems and flowers.

It is found in the golgi apparatus. Its subcellular location is the trans-Golgi network membrane. The protein localises to the early endosome. In terms of biological role, involved in the protein transport to the vacuole, probably at the level of vesicle fusion at the trans-Golgi network (TGN) and not in transport from the TGN to the prevacuolar compartment, by promoting the recycling of vacuolar sorting receptors back to the TGN. Involved in early endosomal vesicle trafficking, particularly at the trans-Golgi-network/early endosome (TGN/EE) thus residing in early endocytic route. Together with BIG5/BEN1 required for polar PIN-FORMED (PIN) proteins localization, for their dynamic repolarization, and consequently for auxin activity gradient formation and auxin-related developmental processes (e.g. embryonic patterning, organogenesis and vasculature venation patterning). Necessary for pollen germination and for cell expansion. Binds syntaxins. The protein is Vacuolar protein sorting-associated protein 45 homolog of Arabidopsis thaliana (Mouse-ear cress).